A 427-amino-acid polypeptide reads, in one-letter code: Glutamate-1-semialdehyde 2,1-aminomutase (427 aa).

Residue K267 is modified to N6-(pyridoxal phosphate)lysine.

It belongs to the class-III pyridoxal-phosphate-dependent aminotransferase family. HemL subfamily. Homodimer. It depends on pyridoxal 5'-phosphate as a cofactor.

It is found in the cytoplasm. The enzyme catalyses (S)-4-amino-5-oxopentanoate = 5-aminolevulinate. Its pathway is porphyrin-containing compound metabolism; protoporphyrin-IX biosynthesis; 5-aminolevulinate from L-glutamyl-tRNA(Glu): step 2/2. This is Glutamate-1-semialdehyde 2,1-aminomutase from Geotalea uraniireducens (strain Rf4) (Geobacter uraniireducens).